Reading from the N-terminus, the 266-residue chain is GATA-type zinc finger protein 1 (266 aa).

Disordered stretches follow at residues 1 to 31 (MEAA…KSRP), 106 to 129 (TQCP…PRKQ), and 171 to 191 (CSQK…SSEA). Polar residues predominate over residues 106 to 121 (TQCPNLEISSATSPAS). Residues 197–221 (CASCRTQRTPLWRDAEDGTPLCNAC) form a GATA-type zinc finger.

In terms of tissue distribution, specifically expressed in adult testis and ovary. Expressed at high levels in the somatic cells of the developing gonads, including Leydig cells in the testes and granulosa cells in the ovaries.

The protein resides in the nucleus. Its function is as follows. Transcriptional regulator that plays a key role in germ cell development. Determines the oogenic fate by activating key genes for the oogenic program and meiotic prophase entry. Acts downstream of bone morphogenetic protein (BMP) by regulating expression of genes required for the oogenic programs, which are repressed by Polycomb activities in sexually uncommitted germ cells. Regulates expression of STRA8, a central downstream effector for the meiotic program. Acts independently of retinoic acid (RA). In males, not required for germ-cell sex determination, but required to allow the spermatogonia to efficiently accomplish the meiotic prophase. The chain is GATA-type zinc finger protein 1 from Mus musculus (Mouse).